The primary structure comprises 462 residues: ATP synthase subunit beta 1 (462 aa).

152 to 159 (GGAGVGKT) contributes to the ATP binding site.

It belongs to the ATPase alpha/beta chains family. As to quaternary structure, F-type ATPases have 2 components, CF(1) - the catalytic core - and CF(0) - the membrane proton channel. CF(1) has five subunits: alpha(3), beta(3), gamma(1), delta(1), epsilon(1). CF(0) has four main subunits: a(1), b(1), b'(1) and c(9-12).

Its subcellular location is the cell inner membrane. The catalysed reaction is ATP + H2O + 4 H(+)(in) = ADP + phosphate + 5 H(+)(out). Functionally, produces ATP from ADP in the presence of a proton gradient across the membrane. The catalytic sites are hosted primarily by the beta subunits. This chain is ATP synthase subunit beta 1, found in Dinoroseobacter shibae (strain DSM 16493 / NCIMB 14021 / DFL 12).